Reading from the N-terminus, the 173-residue chain is Crossover junction endodeoxyribonuclease RuvC (173 aa).

Active-site residues include Asp8, Glu67, and Asp139. 3 residues coordinate Mg(2+): Asp8, Glu67, and Asp139.

It belongs to the RuvC family. As to quaternary structure, homodimer which binds Holliday junction (HJ) DNA. The HJ becomes 2-fold symmetrical on binding to RuvC with unstacked arms; it has a different conformation from HJ DNA in complex with RuvA. In the full resolvosome a probable DNA-RuvA(4)-RuvB(12)-RuvC(2) complex forms which resolves the HJ. Mg(2+) is required as a cofactor.

The protein resides in the cytoplasm. The enzyme catalyses Endonucleolytic cleavage at a junction such as a reciprocal single-stranded crossover between two homologous DNA duplexes (Holliday junction).. Functionally, the RuvA-RuvB-RuvC complex processes Holliday junction (HJ) DNA during genetic recombination and DNA repair. Endonuclease that resolves HJ intermediates. Cleaves cruciform DNA by making single-stranded nicks across the HJ at symmetrical positions within the homologous arms, yielding a 5'-phosphate and a 3'-hydroxyl group; requires a central core of homology in the junction. The consensus cleavage sequence is 5'-(A/T)TT(C/G)-3'. Cleavage occurs on the 3'-side of the TT dinucleotide at the point of strand exchange. HJ branch migration catalyzed by RuvA-RuvB allows RuvC to scan DNA until it finds its consensus sequence, where it cleaves and resolves the cruciform DNA. This chain is Crossover junction endodeoxyribonuclease RuvC, found in Salmonella paratyphi C (strain RKS4594).